Here is a 411-residue protein sequence, read N- to C-terminus: Stearoyl-[acyl-carrier-protein] 9-desaturase 2, chloroplastic (411 aa).

The transit peptide at 1–44 (MALLLNSTITVAMKQNPLVAVSFPRTTCLGSSFSPPRLLRVSCV) directs the protein to the chloroplast. The Fe cation site is built by E148, E186, H189, E239, E272, and H275.

It belongs to the fatty acid desaturase type 2 family. Homodimer. Requires Fe(2+) as cofactor. As to expression, preferentially expressed in roots and flowers.

It localises to the plastid. The protein resides in the chloroplast. The catalysed reaction is octadecanoyl-[ACP] + 2 reduced [2Fe-2S]-[ferredoxin] + O2 + 2 H(+) = (9Z)-octadecenoyl-[ACP] + 2 oxidized [2Fe-2S]-[ferredoxin] + 2 H2O. Its pathway is lipid metabolism; fatty acid metabolism. Converts stearoyl-ACP to oleoyl-ACP by introduction of a cis double bond between carbons 9 and 10 of the acyl chain. Exhibits delta-9 palmitoyl-[acyl-carrier-protein] desaturase (PAD) activity. Involved in omega-7 monounsaturated fatty acid biosynthesis, especially in the endosperm oil. The polypeptide is Stearoyl-[acyl-carrier-protein] 9-desaturase 2, chloroplastic (S-ACP-DES2) (Arabidopsis thaliana (Mouse-ear cress)).